Reading from the N-terminus, the 227-residue chain is Phosphoribosylformylglycinamidine synthase subunit PurQ (227 aa).

Positions 3 to 225 (FAVIVFPGSN…LKQWRETYVV (223 aa)) constitute a Glutamine amidotransferase type-1 domain. Cysteine 86 functions as the Nucleophile in the catalytic mechanism. Catalysis depends on residues histidine 194 and glutamate 196.

In terms of assembly, part of the FGAM synthase complex composed of 1 PurL, 1 PurQ and 2 PurS subunits.

It localises to the cytoplasm. The enzyme catalyses N(2)-formyl-N(1)-(5-phospho-beta-D-ribosyl)glycinamide + L-glutamine + ATP + H2O = 2-formamido-N(1)-(5-O-phospho-beta-D-ribosyl)acetamidine + L-glutamate + ADP + phosphate + H(+). It carries out the reaction L-glutamine + H2O = L-glutamate + NH4(+). The protein operates within purine metabolism; IMP biosynthesis via de novo pathway; 5-amino-1-(5-phospho-D-ribosyl)imidazole from N(2)-formyl-N(1)-(5-phospho-D-ribosyl)glycinamide: step 1/2. Part of the phosphoribosylformylglycinamidine synthase complex involved in the purines biosynthetic pathway. Catalyzes the ATP-dependent conversion of formylglycinamide ribonucleotide (FGAR) and glutamine to yield formylglycinamidine ribonucleotide (FGAM) and glutamate. The FGAM synthase complex is composed of three subunits. PurQ produces an ammonia molecule by converting glutamine to glutamate. PurL transfers the ammonia molecule to FGAR to form FGAM in an ATP-dependent manner. PurS interacts with PurQ and PurL and is thought to assist in the transfer of the ammonia molecule from PurQ to PurL. This is Phosphoribosylformylglycinamidine synthase subunit PurQ from Bacillus cereus (strain 03BB102).